The primary structure comprises 181 residues: Large ribosomal subunit protein uL6 (181 aa).

It belongs to the universal ribosomal protein uL6 family. As to quaternary structure, part of the 50S ribosomal subunit.

In terms of biological role, this protein binds to the 23S rRNA, and is important in its secondary structure. It is located near the subunit interface in the base of the L7/L12 stalk, and near the tRNA binding site of the peptidyltransferase center. This chain is Large ribosomal subunit protein uL6, found in Synechococcus sp. (strain CC9605).